The chain runs to 434 residues: Alpha-enolase (434 aa).

Serine 2 is modified (N-acetylserine). At lysine 5 the chain carries N6-acetyllysine. Serine 40 provides a ligand contact to Mg(2+). Residue tyrosine 44 is modified to Phosphotyrosine. Lysine 60 carries the post-translational modification N6-acetyllysine; alternate. Lysine 60 is modified (N6-succinyllysine; alternate). Residues lysine 64 and lysine 71 each carry the N6-acetyllysine modification. An N6-acetyllysine; alternate modification is found at lysine 89. Lysine 89 carries the post-translational modification N6-succinyllysine; alternate. Lysine 126 is subject to N6-acetyllysine. Residues histidine 158 and glutamate 167 each contribute to the substrate site. 2 positions are modified to N6-acetyllysine: lysine 193 and lysine 199. Lysine 202 carries the N6-acetyllysine; alternate modification. A Glycyl lysine isopeptide (Lys-Gly) (interchain with G-Cter in SUMO2); alternate cross-link involves residue lysine 202. Glutamate 210 acts as the Proton donor in catalysis. N6-acetyllysine; alternate is present on residues lysine 228 and lysine 233. Residue lysine 228 is modified to N6-succinyllysine; alternate. Lysine 228 carries the N6-(2-hydroxyisobutyryl)lysine; alternate modification. Lysine 233 is modified (N6-malonyllysine; alternate). Aspartate 245 is a Mg(2+) binding site. N6-acetyllysine is present on lysine 256. Serine 263 bears the Phosphoserine mark. Residue lysine 281 is modified to N6-acetyllysine; alternate. Lysine 281 carries the N6-(2-hydroxyisobutyryl)lysine; alternate modification. Lysine 285 bears the N6-acetyllysine mark. Phosphotyrosine is present on tyrosine 287. At serine 291 the chain carries Phosphoserine. The Mg(2+) site is built by glutamate 293 and aspartate 318. Positions 293 and 318 each coordinate substrate. N6-acetyllysine occurs at positions 335 and 343. Catalysis depends on lysine 343, which acts as the Proton acceptor. Residues 370 to 373 (SHRS) and lysine 394 each bind substrate. The segment at 405–434 (AKYNQILRIEEELGSKAKFAGRSFRNPLAK) is required for interaction with PLG. Lysine 406 bears the N6-acetyllysine mark. Lysine 420 bears the N6-acetyllysine; alternate mark. Lysine 420 is subject to N6-succinyllysine; alternate. An N6-malonyllysine; alternate modification is found at lysine 420.

It belongs to the enolase family. As to quaternary structure, mammalian enolase is composed of 3 isozyme subunits, alpha, beta and gamma, which can form homodimers or heterodimers which are cell-type and development-specific. ENO1 interacts with PLG in the neuronal plasma membrane and promotes its activation. The C-terminal lysine is required for this binding. Interacts with ENO4 and PGAM2. Interacts with CMTM6. Mg(2+) serves as cofactor. In terms of processing, ISGylated. Lysine 2-hydroxyisobutyrylation (Khib) by p300/EP300 activates the phosphopyruvate hydratase activity. Expressed in flagella of epididymal sperm. The alpha/alpha homodimer is expressed in embryo and in most adult tissues. The alpha/beta heterodimer and the beta/beta homodimer are found in striated muscle, and the alpha/gamma heterodimer and the gamma/gamma homodimer in neurons.

It is found in the cytoplasm. Its subcellular location is the cell membrane. The enzyme catalyses (2R)-2-phosphoglycerate = phosphoenolpyruvate + H2O. The protein operates within carbohydrate degradation; glycolysis; pyruvate from D-glyceraldehyde 3-phosphate: step 4/5. Glycolytic enzyme that catalyzes the conversion of 2-phosphoglycerate to phosphoenolpyruvate. In addition to glycolysis, involved in various processes such as growth control, hypoxia tolerance and allergic responses. May also function in the intravascular and pericellular fibrinolytic system due to its ability to serve as a receptor and activator of plasminogen on the cell surface of several cell-types such as leukocytes and neurons. Stimulates immunoglobulin production. The sequence is that of Alpha-enolase (Eno1) from Rattus norvegicus (Rat).